A 581-amino-acid polypeptide reads, in one-letter code: NADH-quinone oxidoreductase subunit C/D (581 aa).

The tract at residues 1–172 (MSGTDLVSEL…PLFNMTAALF (172 aa)) is NADH dehydrogenase I subunit C. Residues 196 to 581 (ELMILNYGPH…IDYVMSDVDR (386 aa)) are NADH dehydrogenase I subunit D.

It in the N-terminal section; belongs to the complex I 30 kDa subunit family. This sequence in the C-terminal section; belongs to the complex I 49 kDa subunit family. In terms of assembly, NDH-1 is composed of 13 different subunits. Subunits NuoB, CD, E, F, and G constitute the peripheral sector of the complex.

It localises to the cell inner membrane. The enzyme catalyses a quinone + NADH + 5 H(+)(in) = a quinol + NAD(+) + 4 H(+)(out). NDH-1 shuttles electrons from NADH, via FMN and iron-sulfur (Fe-S) centers, to quinones in the respiratory chain. The immediate electron acceptor for the enzyme in this species is believed to be ubiquinone. Couples the redox reaction to proton translocation (for every two electrons transferred, four hydrogen ions are translocated across the cytoplasmic membrane), and thus conserves the redox energy in a proton gradient. This chain is NADH-quinone oxidoreductase subunit C/D, found in Rhodopseudomonas palustris (strain BisB5).